The chain runs to 189 residues: uncharacterized protein (189 aa).

Residues 31 to 54 (KCENIDDLANRYEVSKQEVEKVFK) are a coiled coil. EF-hand domains lie at 47–82 (QEVE…LGID), 83–118 (VSPK…KIKL), 120–155 (TVKA…TVST), and 157–189 (ITVK…CQTV). The Ca(2+) site is built by D60, D62, S64, T66, E71, D96, S98, D100, Q102, E107, D133, N135, E137, and E144.

This is an uncharacterized protein from Caenorhabditis elegans.